Consider the following 268-residue polypeptide: Tryptophan synthase alpha chain (268 aa).

Catalysis depends on proton acceptor residues Glu-47 and Asp-58.

It belongs to the TrpA family. In terms of assembly, tetramer of two alpha and two beta chains.

It carries out the reaction (1S,2R)-1-C-(indol-3-yl)glycerol 3-phosphate + L-serine = D-glyceraldehyde 3-phosphate + L-tryptophan + H2O. The protein operates within amino-acid biosynthesis; L-tryptophan biosynthesis; L-tryptophan from chorismate: step 5/5. Functionally, the alpha subunit is responsible for the aldol cleavage of indoleglycerol phosphate to indole and glyceraldehyde 3-phosphate. This Chlorobium phaeobacteroides (strain BS1) protein is Tryptophan synthase alpha chain.